Reading from the N-terminus, the 278-residue chain is MGDIINGKAESQKYKDKIIEFINERKKQGLDIPCIASITVGDDGGSLYYVNNQKKVSESLGIEFKSIFLDESIREEELIKLIEGLNVDNKIHGIMLQLPLPNHIDAKLVTSKIDANKDIDSLTDINTGKFYKGEKSFIPCTPRSIINLIKSLNVDICGKNAVVIGRSNIVGKPTAQLLLNENATVTICHSRTQNLKDICKKADIIVSAIGRPGFITDEFVNEKSIVIDVGTTVVDGKLRGDVVFDEVIKKAAYVTPVPGGVGAMTTTMLILNVCEALK.

NADP(+)-binding positions include Gly-165–Ser-167, Ser-190, and Thr-231.

The protein belongs to the tetrahydrofolate dehydrogenase/cyclohydrolase family. Homodimer.

The enzyme catalyses (6R)-5,10-methylene-5,6,7,8-tetrahydrofolate + NADP(+) = (6R)-5,10-methenyltetrahydrofolate + NADPH. The catalysed reaction is (6R)-5,10-methenyltetrahydrofolate + H2O = (6R)-10-formyltetrahydrofolate + H(+). The protein operates within one-carbon metabolism; tetrahydrofolate interconversion. Its function is as follows. Catalyzes the oxidation of 5,10-methylenetetrahydrofolate to 5,10-methenyltetrahydrofolate and then the hydrolysis of 5,10-methenyltetrahydrofolate to 10-formyltetrahydrofolate. The sequence is that of Bifunctional protein FolD from Clostridium acetobutylicum (strain ATCC 824 / DSM 792 / JCM 1419 / IAM 19013 / LMG 5710 / NBRC 13948 / NRRL B-527 / VKM B-1787 / 2291 / W).